Here is a 787-residue protein sequence, read N- to C-terminus: Aconitate hydratase, mitochondrial (787 aa).

The N-terminal 33 residues, 1-33 (MISTRLARAGALAPKSRLFLGTRAFATVGDSPL), are a transit peptide targeting the mitochondrion. Residues Gln104 and 197–199 (DSH) each bind substrate. The [4Fe-4S] cluster site is built by Cys390, Cys453, and Cys456. Substrate contacts are provided by Arg479 and Arg484. The disordered stretch occupies residues 529–559 (LQPPTGEGLPAKGYDPGRDTYQAPPADRSSV). Substrate is bound by residues Arg612 and 675 to 676 (SR).

It belongs to the aconitase/IPM isomerase family. The cofactor is [4Fe-4S] cluster.

The protein localises to the mitochondrion. It carries out the reaction citrate = D-threo-isocitrate. It catalyses the reaction (2R)-homocitrate = cis-homoaconitate + H2O. It participates in carbohydrate metabolism; tricarboxylic acid cycle; isocitrate from oxaloacetate: step 2/2. The protein operates within amino-acid biosynthesis; L-lysine biosynthesis via AAA pathway; L-alpha-aminoadipate from 2-oxoglutarate: step 2/5. In terms of biological role, catalyzes the isomerization of citrate to isocitrate via cis-aconitate, a step in the citric acid cycle. Also catalyzes the reversible dehydration of (R)-homocitrate to cis-homoaconitate, a step in the alpha-aminoadipate pathway for lysine biosynthesis. This Aspergillus fumigatus (strain ATCC MYA-4609 / CBS 101355 / FGSC A1100 / Af293) (Neosartorya fumigata) protein is Aconitate hydratase, mitochondrial (acoA).